The sequence spans 327 residues: Probable serine/threonine-protein kinase WNK5 (327 aa).

The tract at residues 1-48 is disordered; the sequence is MPPNPTPPRRATTTTTRATSGVRRGEEEQGGMAVSASAGEEEEAFEEV. A compositionally biased stretch (low complexity) spans 9-19; it reads RRATTTTTRAT. A compositionally biased stretch (acidic residues) spans 39–48; the sequence is GEEEEAFEEV. The 260-residue stretch at 55–314 folds into the Protein kinase domain; the sequence is GRYADVLGLG…AAELLRDPFF (260 aa). Residue 136-139 participates in ATP binding; that stretch reads TEVC. The Proton acceptor role is filled by Asp-203.

It belongs to the protein kinase superfamily. Ser/Thr protein kinase family. WNK subfamily.

It catalyses the reaction L-seryl-[protein] + ATP = O-phospho-L-seryl-[protein] + ADP + H(+). The enzyme catalyses L-threonyl-[protein] + ATP = O-phospho-L-threonyl-[protein] + ADP + H(+). This is Probable serine/threonine-protein kinase WNK5 (WNK5) from Oryza sativa subsp. japonica (Rice).